A 337-amino-acid polypeptide reads, in one-letter code: Basic membrane protein A2 (337 aa).

The signal sequence occupies residues 1 to 17; it reads MNKLLLLILFECIIFLS. A lipid anchor (N-palmitoyl cysteine) is attached at Cys-18. A lipid anchor (S-diacylglycerol cysteine) is attached at Cys-18.

It belongs to the BMP lipoprotein family. In terms of assembly, monomer.

Its subcellular location is the cell inner membrane. In terms of biological role, immunogenic protein. May be part of an ABC-type nucleoside uptake system involved in the purine salvage pathway. The polypeptide is Basic membrane protein A2 (bmpA2) (Borrelia garinii subsp. bavariensis (strain ATCC BAA-2496 / DSM 23469 / PBi) (Borreliella bavariensis)).